The following is a 338-amino-acid chain: Methionine import ATP-binding protein MetN 2 (338 aa).

One can recognise an ABC transporter domain in the interval 2–242 (IEIEKVCVDF…PQHAFTQQLV (241 aa)). 39–46 (GTSGAGKS) serves as a coordination point for ATP.

The protein belongs to the ABC transporter superfamily. Methionine importer (TC 3.A.1.24) family. As to quaternary structure, the complex is composed of two ATP-binding proteins (MetN), two transmembrane proteins (MetI) and a solute-binding protein (MetQ).

It localises to the cell inner membrane. It carries out the reaction L-methionine(out) + ATP + H2O = L-methionine(in) + ADP + phosphate + H(+). It catalyses the reaction D-methionine(out) + ATP + H2O = D-methionine(in) + ADP + phosphate + H(+). In terms of biological role, part of the ABC transporter complex MetNIQ involved in methionine import. Responsible for energy coupling to the transport system. This chain is Methionine import ATP-binding protein MetN 2, found in Salmonella paratyphi A (strain ATCC 9150 / SARB42).